A 417-amino-acid polypeptide reads, in one-letter code: Serine hydroxymethyltransferase (417 aa).

(6S)-5,6,7,8-tetrahydrofolate contacts are provided by residues leucine 121 and 125–127 (GHL). An N6-(pyridoxal phosphate)lysine modification is found at lysine 229. 355-357 (SPF) contributes to the (6S)-5,6,7,8-tetrahydrofolate binding site.

It belongs to the SHMT family. As to quaternary structure, homodimer. Requires pyridoxal 5'-phosphate as cofactor.

The protein localises to the cytoplasm. It catalyses the reaction (6R)-5,10-methylene-5,6,7,8-tetrahydrofolate + glycine + H2O = (6S)-5,6,7,8-tetrahydrofolate + L-serine. It functions in the pathway one-carbon metabolism; tetrahydrofolate interconversion. It participates in amino-acid biosynthesis; glycine biosynthesis; glycine from L-serine: step 1/1. In terms of biological role, catalyzes the reversible interconversion of serine and glycine with tetrahydrofolate (THF) serving as the one-carbon carrier. This reaction serves as the major source of one-carbon groups required for the biosynthesis of purines, thymidylate, methionine, and other important biomolecules. Also exhibits THF-independent aldolase activity toward beta-hydroxyamino acids, producing glycine and aldehydes, via a retro-aldol mechanism. This Shewanella baltica (strain OS223) protein is Serine hydroxymethyltransferase.